The following is a 727-amino-acid chain: Fatty acid oxidation complex subunit alpha (727 aa).

The tract at residues 16–205 (NQTASVFSFD…RLGLVDDAVP (190 aa)) is enoyl-CoA hydratase. The interval 321 to 727 (AKIKHVGILG…MAEQNKSFYP (407 aa)) is 3-hydroxyacyl-CoA dehydrogenase.

In the N-terminal section; belongs to the enoyl-CoA hydratase/isomerase family. The protein in the central section; belongs to the 3-hydroxyacyl-CoA dehydrogenase family. In terms of assembly, heterotetramer of two alpha chains (FadJ) and two beta chains (FadI).

The protein localises to the cytoplasm. The enzyme catalyses a (3S)-3-hydroxyacyl-CoA = a (2E)-enoyl-CoA + H2O. It catalyses the reaction a 4-saturated-(3S)-3-hydroxyacyl-CoA = a (3E)-enoyl-CoA + H2O. It carries out the reaction a (3S)-3-hydroxyacyl-CoA + NAD(+) = a 3-oxoacyl-CoA + NADH + H(+). The catalysed reaction is (3S)-3-hydroxybutanoyl-CoA = (3R)-3-hydroxybutanoyl-CoA. It functions in the pathway lipid metabolism; fatty acid beta-oxidation. Catalyzes the formation of a hydroxyacyl-CoA by addition of water on enoyl-CoA. Also exhibits 3-hydroxyacyl-CoA epimerase and 3-hydroxyacyl-CoA dehydrogenase activities. The chain is Fatty acid oxidation complex subunit alpha from Photorhabdus laumondii subsp. laumondii (strain DSM 15139 / CIP 105565 / TT01) (Photorhabdus luminescens subsp. laumondii).